Reading from the N-terminus, the 609-residue chain is Tyrosyl-DNA phosphodiesterase 1 (609 aa).

The segment covering 1 to 12 (MSQESSYGKWTI) has biased composition (polar residues). The segment at 1–154 (MSQESSYGKW…EYETSGEGQD (154 aa)) is disordered. Phosphoserine is present on residues serine 61, serine 119, and serine 132. The span at 127–143 (KVEDRSPPDSHRAQRAD) shows a compositional bias: basic and acidic residues. Threonine 148 is subject to Phosphothreonine. Serine 149 carries the phosphoserine modification. Histidine 264 functions as the Nucleophile in the catalytic mechanism. Lysine 266 is a binding site for substrate. Residues 401 to 404 (SIGS) are interaction with DNA. The Proton donor/acceptor role is filled by histidine 494. Lysine 496 contributes to the substrate binding site.

This sequence belongs to the tyrosyl-DNA phosphodiesterase family. As to quaternary structure, monomer.

Its subcellular location is the nucleus. It localises to the cytoplasm. Functionally, DNA repair enzyme that can remove a variety of covalent adducts from DNA through hydrolysis of a 3'-phosphodiester bond, giving rise to DNA with a free 3' phosphate. Catalyzes the hydrolysis of dead-end complexes between DNA and the topoisomerase I active site tyrosine residue. Hydrolyzes 3'-phosphoglycolates on protruding 3' ends on DNA double-strand breaks due to DNA damage by radiation and free radicals. Acts on blunt-ended double-strand DNA breaks and on single-stranded DNA. Has low 3'exonuclease activity and can remove a single nucleoside from the 3'end of DNA and RNA molecules with 3'hydroxyl groups. Has no exonuclease activity towards DNA or RNA with a 3'phosphate. This Rattus norvegicus (Rat) protein is Tyrosyl-DNA phosphodiesterase 1 (Tdp1).